The chain runs to 405 residues: Arginine biosynthesis bifunctional protein ArgJ (405 aa).

Substrate contacts are provided by T167, K190, T201, E281, N400, and S405. T201 functions as the Nucleophile in the catalytic mechanism.

Belongs to the ArgJ family. As to quaternary structure, heterotetramer of two alpha and two beta chains.

The protein resides in the cytoplasm. The catalysed reaction is N(2)-acetyl-L-ornithine + L-glutamate = N-acetyl-L-glutamate + L-ornithine. It carries out the reaction L-glutamate + acetyl-CoA = N-acetyl-L-glutamate + CoA + H(+). The protein operates within amino-acid biosynthesis; L-arginine biosynthesis; L-ornithine and N-acetyl-L-glutamate from L-glutamate and N(2)-acetyl-L-ornithine (cyclic): step 1/1. It functions in the pathway amino-acid biosynthesis; L-arginine biosynthesis; N(2)-acetyl-L-ornithine from L-glutamate: step 1/4. In terms of biological role, catalyzes two activities which are involved in the cyclic version of arginine biosynthesis: the synthesis of N-acetylglutamate from glutamate and acetyl-CoA as the acetyl donor, and of ornithine by transacetylation between N(2)-acetylornithine and glutamate. The protein is Arginine biosynthesis bifunctional protein ArgJ of Nocardia farcinica (strain IFM 10152).